The sequence spans 1086 residues: Endo-1,4-beta-xylanase C (1086 aa).

Residues 1 to 31 (MRGKWLRLCLAAVLIVSLLPGLGAGEWKASA) form the signal peptide. 2 consecutive CBM-cenC domains span residues 35-183 (GDIL…IRLV) and 197-359 (GQAL…ITAT). The 346-residue stretch at 365–710 (EKNIPDLAKK…KPAYWALVDP (346 aa)) folds into the GH10 domain. Catalysis depends on glutamate 502, which acts as the Proton donor. Aspartate 556 is a catalytic residue. The active-site Nucleophile is glutamate 620.

The protein belongs to the glycosyl hydrolase 10 (cellulase F) family.

The enzyme catalyses Endohydrolysis of (1-&gt;4)-beta-D-xylosidic linkages in xylans.. It functions in the pathway glycan degradation; xylan degradation. In terms of biological role, endoxylanase with high hydrolytic activity on birchwood and oat spelt xylan. Xylotetraose, xylotriose, xylobiose and xylose are the main products from birchwood xylan hydrolysis. Shows increasing activity on xylo-oligosaccharides of increasing length. Displays very low hydrolytic activity on Avicel, carboxymethylcellulose (CMC) and p-nitrophenyl-beta-xylopyranoside. Also shows transxylosidase activity, allowing the formation of xylo-oligosaccharides of higher degree of polymerization than the starting substrate. The sequence is that of Endo-1,4-beta-xylanase C (xynC) from Paenibacillus barcinonensis.